Consider the following 590-residue polypeptide: Melanophilin (590 aa).

Residues 4–124 (RLDLSTLTDE…IGSLEWYYQH (121 aa)) enclose the RabBD domain. Residues 64–107 (CARCLQPYRLLLNSRRQCLECSLFVCKSCSHAHPEEQGWLCDPC) form an FYVE-type zinc finger. Disordered regions lie at residues 147–182 (GGGGSEPSLEEGNGDSEQTDEDGDLDTEARDQPLNS), 215–276 (SVPE…AELD), 311–335 (DTSDEDSIQGPRAASQHSKRRARTV), 361–472 (VLPP…SEIS), and 485–590 (GLTV…AQQP). The segment covering 154 to 172 (SLEEGNGDSEQTDEDGDLD) has biased composition (acidic residues). Residues 215-238 (SVPESAHSLQSLSGEPYSEDTTSL) are compositionally biased toward polar residues. Residues 339–485 (QILELNKRMS…SRIAALRAAG (147 aa)) are a coiled coil. The segment covering 391-401 (LTSNISGSSTS) has biased composition (low complexity). Basic and acidic residues predominate over residues 424–433 (GHMETQERNP).

In terms of assembly, binds RAB27A that has been activated by GTP-binding via its N-terminus. Binds MYO5A via its C-terminal coiled coil domain. In terms of tissue distribution, highly expressed in embryos at day 7; not detectable at day 11. Highly expressed in adult stomach; detected at lower levels in kidney, lung, skin and small intestine. Detected in melanocytes.

Its subcellular location is the melanosome. Functionally, rab effector protein involved in melanosome transport. Serves as link between melanosome-bound RAB27A and the motor protein MYO5A. In Mus musculus (Mouse), this protein is Melanophilin (Mlph).